We begin with the raw amino-acid sequence, 853 residues long: E3 ubiquitin-protein ligase ZNRF3 (853 aa).

Positions 1-28 (MKEPRIRGGLPLVWLWVLLAVAPGESLA) are cleaved as a signal peptide. Residues 29–192 (KETAFVEVVL…PRQPTEYFDM (164 aa)) are Extracellular-facing. The helical transmembrane segment at 193–213 (GIFLAFFVVVSLVCLILLIKI) threads the bilayer. Residues 214–853 (KLKQRRSQNS…GQDCHPTDRD (640 aa)) lie on the Cytoplasmic side of the membrane. The RING-type; atypical zinc-finger motif lies at 266 to 307 (CAICLEKYIDGEELRVIPCTHRFHKRCVDPWLLQNHTCPHCR). Disordered regions lie at residues 583 to 629 (SRSP…RLSS), 650 to 673 (SSGT…RGPE), 685 to 713 (GDPS…GGLY), and 834 to 853 (TGKE…TDRD). The segment covering 589 to 607 (TGGGDAPGCGGEGGTGSGR) has biased composition (gly residues). The span at 615 to 629 (HQTFPNSPSRDRLSS) shows a compositional bias: polar residues.

This sequence belongs to the ZNRF3 family.

It localises to the cell membrane. The enzyme catalyses S-ubiquitinyl-[E2 ubiquitin-conjugating enzyme]-L-cysteine + [acceptor protein]-L-lysine = [E2 ubiquitin-conjugating enzyme]-L-cysteine + N(6)-ubiquitinyl-[acceptor protein]-L-lysine.. It participates in protein modification; protein ubiquitination. Its function is as follows. E3 ubiquitin-protein ligase that acts as a negative regulator of the Wnt signaling pathway by mediating the ubiquitination and subsequent degradation of Wnt receptor complex components. Along with RSPO2 and RNF43, constitutes a master switch that governs limb specification. This chain is E3 ubiquitin-protein ligase ZNRF3 (znrf3), found in Xenopus tropicalis (Western clawed frog).